The primary structure comprises 44 residues: Photosystem I reaction center subunit IX (44 aa).

The chain crosses the membrane as a helical span at residues 7 to 27; the sequence is YLSVAPVLTTLWFGSLAGLLI.

It belongs to the PsaJ family.

It is found in the plastid. Its subcellular location is the chloroplast thylakoid membrane. Functionally, may help in the organization of the PsaE and PsaF subunits. In Nymphaea alba (White water-lily), this protein is Photosystem I reaction center subunit IX.